The sequence spans 517 residues: Ribonuclease Y (517 aa).

Residues 4–24 traverse the membrane as a helical segment; it reads LIYIVILFVGIAAGAFFGISV. A KH domain is found at 207-267; it reads TISTVALPND…LRREVARRTI (61 aa). One can recognise an HD domain in the interval 333–426; the sequence is VLAHSVEVAQ…VAAADAISAA (94 aa).

This sequence belongs to the RNase Y family.

Its subcellular location is the cell membrane. Its function is as follows. Endoribonuclease that initiates mRNA decay. This is Ribonuclease Y from Fervidobacterium nodosum (strain ATCC 35602 / DSM 5306 / Rt17-B1).